Reading from the N-terminus, the 271-residue chain is Formamidopyrimidine-DNA glycosylase (271 aa).

The active-site Schiff-base intermediate with DNA is proline 2. Residue glutamate 3 is the Proton donor of the active site. Lysine 58 serves as the catalytic Proton donor; for beta-elimination activity. The DNA site is built by histidine 91 and arginine 109. Residues phenylalanine 236–arginine 270 form an FPG-type zinc finger. Arginine 260 acts as the Proton donor; for delta-elimination activity in catalysis.

Belongs to the FPG family. As to quaternary structure, monomer. Zn(2+) is required as a cofactor.

It catalyses the reaction Hydrolysis of DNA containing ring-opened 7-methylguanine residues, releasing 2,6-diamino-4-hydroxy-5-(N-methyl)formamidopyrimidine.. The enzyme catalyses 2'-deoxyribonucleotide-(2'-deoxyribose 5'-phosphate)-2'-deoxyribonucleotide-DNA = a 3'-end 2'-deoxyribonucleotide-(2,3-dehydro-2,3-deoxyribose 5'-phosphate)-DNA + a 5'-end 5'-phospho-2'-deoxyribonucleoside-DNA + H(+). In terms of biological role, involved in base excision repair of DNA damaged by oxidation or by mutagenic agents. Acts as a DNA glycosylase that recognizes and removes damaged bases. Has a preference for oxidized purines, such as 7,8-dihydro-8-oxoguanine (8-oxoG). Has AP (apurinic/apyrimidinic) lyase activity and introduces nicks in the DNA strand. Cleaves the DNA backbone by beta-delta elimination to generate a single-strand break at the site of the removed base with both 3'- and 5'-phosphates. This chain is Formamidopyrimidine-DNA glycosylase, found in Aromatoleum aromaticum (strain DSM 19018 / LMG 30748 / EbN1) (Azoarcus sp. (strain EbN1)).